Reading from the N-terminus, the 1896-residue chain is Trinucleotide repeat-containing gene 6A protein (1896 aa).

2 stretches are compositionally biased toward basic and acidic residues: residues 1–21 (MREL…RDLV) and 39–57 (KKKE…KVPE). Disordered regions lie at residues 1–137 (MREL…LLKR), 159–209 (SESS…DCST), 222–250 (EAWP…SESE), and 257–276 (ASGN…GLGS). Residues 1-917 (MRELEAKATK…GDPPKCNQSL (917 aa)) are interaction with argonaute family proteins. 2 stretches are compositionally biased toward low complexity: residues 69–93 (ANSD…ASNQ) and 101–113 (QQPQ…QQPQ). Basic residues predominate over residues 125-137 (RFRHQEHKQLLKR). The sufficient for interaction with AGO1, AGO3 and AGO4 stretch occupies residues 239 to 488 (IDADSASNSE…QAPSVMNGTS (250 aa)). 5 sufficient for interaction with AGO2 regions span residues 255–331 (VMAS…NAWG), 303–384 (GALI…STIG), 325–424 (NRMN…KVSF), 394–480 (SKVS…QIQA), and 487–736 (TSLS…NGTE). Polar residues-rich tracts occupy residues 396–410 (VSGS…SLQE) and 417–429 (SGTQ…GQPQ). 5 disordered regions span residues 396-461 (VSGS…NELP), 548-683 (FQVN…RRKI), 703-998 (LSNS…DPSK), 1011-1126 (IPEA…PTGW), and 1143-1182 (QELN…NKQE). Low complexity predominate over residues 430-443 (NITTETTGPNNTTN). A compositionally biased stretch (polar residues) spans 444-461 (FMTSSLPNSGSVQNNELP). Residues 551–1279 (NTNKGGGVWE…MFGVGNTAAQ (729 aa)) are sufficient for interaction with AGO1 and AGO4. Residues 573–584 (SGNGANSGGSRR) show a composition bias toward gly residues. 2 stretches are compositionally biased toward polar residues: residues 591 to 617 (QNTG…SANG) and 635 to 647 (GSAT…QNSV). Residues 665–683 (GRLEEKVTGESQSRDRRKI) show a composition bias toward basic and acidic residues. The segment covering 703–722 (LSNSGWGQTPIKQNTAWDTE) has biased composition (polar residues). A compositionally biased stretch (basic and acidic residues) spans 723–733 (TSPRGERKTDN). A Phosphoserine modification is found at S724. Over residues 738 to 766 (WGSSATQTFNSGACTDKTSPNSNDTSSVS) the composition is skewed to polar residues. Low complexity predominate over residues 858-871 (SSSGGSDSDRSISG). S863 carries the phosphoserine modification. Composition is skewed to polar residues over residues 876-906 (GKTS…SSQG) and 924-937 (KPVS…QQDI). S976 is subject to Phosphoserine. Composition is skewed to polar residues over residues 1033–1042 (AVSSKETSSG), 1054–1064 (TPATTVDNGTS), and 1082–1105 (AASN…SGPK). The segment at 1059–1129 (VDNGTSAWGK…GSRPTGWEEE (71 aa)) is sufficient for interaction with AGO2. The segment covering 1143-1163 (QELNSSLNWPPYTKKMSSKGL) has biased composition (low complexity). Residues S1197 and S1255 each carry the phosphoserine modification. Disordered stretches follow at residues 1234-1256 (GDYN…ESSM), 1273-1306 (VGNT…PPPL), and 1360-1395 (QRAQ…QSRQ). Low complexity-rich tracts occupy residues 1284 to 1296 (QQPP…SSQP) and 1360 to 1376 (QRAQ…RQQQ). Phosphothreonine is present on T1406. Disordered regions lie at residues 1512–1570 (MNSS…VTPG) and 1659–1685 (PKNI…WDNS). At S1520 the chain carries Phosphoserine. Positions 1605–1896 (TSAWSSIRAS…DHLGGGGESM (292 aa)) are sufficient for interaction with AGO2. One can recognise an RRM domain in the interval 1716 to 1788 (NWLVLKNLTP…TTILAEFASE (73 aa)). Residues S1804 and S1825 each carry the phosphoserine modification.

Belongs to the GW182 family. As to quaternary structure, interacts with AGO2. Interacts with AGO1, AGO3 and AGO4. Interacts with CNOT1; the interaction is direct and mediates the association with the CCR4-NOT complex. Interacts with ZC3H12A. Interacts with SND1. Interacts with GARRE1.

Its subcellular location is the cytoplasm. It localises to the P-body. Functionally, plays a role in RNA-mediated gene silencing by both micro-RNAs (miRNAs) and short interfering RNAs (siRNAs). Required for miRNA-dependent repression of translation and for siRNA-dependent endonucleolytic cleavage of complementary mRNAs by argonaute family proteins. As a scaffolding protein, associates with argonaute proteins bound to partially complementary mRNAs, and can simultaneously recruit CCR4-NOT and PAN deadenylase complexes. The polypeptide is Trinucleotide repeat-containing gene 6A protein (Tnrc6a) (Mus musculus (Mouse)).